A 572-amino-acid polypeptide reads, in one-letter code: Sulfite reductase [NADPH] hemoprotein beta-component (572 aa).

Residues C437, C443, C482, and C486 each coordinate [4Fe-4S] cluster. Residue C486 participates in siroheme binding.

The protein belongs to the nitrite and sulfite reductase 4Fe-4S domain family. In terms of assembly, alpha(8)-beta(8). The alpha component is a flavoprotein, the beta component is a hemoprotein. It depends on siroheme as a cofactor. [4Fe-4S] cluster serves as cofactor.

It catalyses the reaction hydrogen sulfide + 3 NADP(+) + 3 H2O = sulfite + 3 NADPH + 4 H(+). It participates in sulfur metabolism; hydrogen sulfide biosynthesis; hydrogen sulfide from sulfite (NADPH route): step 1/1. In terms of biological role, component of the sulfite reductase complex that catalyzes the 6-electron reduction of sulfite to sulfide. This is one of several activities required for the biosynthesis of L-cysteine from sulfate. This chain is Sulfite reductase [NADPH] hemoprotein beta-component, found in Staphylococcus epidermidis (strain ATCC 12228 / FDA PCI 1200).